Reading from the N-terminus, the 553-residue chain is Probable glucomannan 4-beta-mannosyltransferase 1 (553 aa).

Residues Leu64 to Phe84 traverse the membrane as a helical segment. Asp163 is a catalytic residue. Substrate contacts are provided by Asp222 and Asp224. Asp316 is an active-site residue. 4 helical membrane-spanning segments follow: residues Val395 to Phe415, Leu431 to Val451, Glu510 to Thr530, and Trp531 to Val551.

Belongs to the glycosyltransferase 2 family. Plant cellulose synthase-like A subfamily.

The protein resides in the golgi apparatus membrane. The enzyme catalyses GDP-mannose + (glucomannan)n = GDP + (glucomannan)n+1.. In terms of biological role, probable mannan synthase which consists of a 4-beta-mannosyltransferase activity on mannan using GDP-mannose. The beta-1,4-mannan product is the backbone for galactomannan synthesis by galactomannan galactosyltransferase. Galactomannan is a noncellulosic polysaccharides of plant cell wall. The chain is Probable glucomannan 4-beta-mannosyltransferase 1 from Arabidopsis thaliana (Mouse-ear cress).